A 151-amino-acid polypeptide reads, in one-letter code: Large ribosomal subunit protein bL9 (151 aa).

Belongs to the bacterial ribosomal protein bL9 family.

Its function is as follows. Binds to the 23S rRNA. The chain is Large ribosomal subunit protein bL9 from Mycoplasmopsis agalactiae (strain NCTC 10123 / CIP 59.7 / PG2) (Mycoplasma agalactiae).